The chain runs to 182 residues: Receptor activity-modifying protein 2 (182 aa).

The N-terminal stretch at 1 to 45 (MAPLRVERAPGGSQLAVTSAQRPAALRLPPLLLLLLLLLLGAVST) is a signal peptide. The Extracellular portion of the chain corresponds to 46–150 (SPESLNQSHP…VQPTFSDPPE (105 aa)). N-linked (GlcNAc...) asparagine glycans are attached at residues N51, N92, and N137. Intrachain disulfides connect C76/C106 and C91/C138. A helical membrane pass occupies residues 151 to 172 (DVLLAMIIAPICLIPFLVTLVV). Topologically, residues 173-182 (WRSKDGDAQA) are cytoplasmic.

Belongs to the RAMP family. Heterodimer of CALCRL and RAMP2; the interaction forms the receptor complex for adrenomedullin/ADM. Heterodimer of CALCR and RAMP2; interaction forms the AMYR2 receptor complex for calcitonin/CALC and amylin/IAPP.

It is found in the cell membrane. In terms of biological role, accessory protein that interacts with and modulates the function of G-protein coupled receptors including calcitonin gene-related peptide type 1 receptor (CALCRL) and calcitonin receptor (CALCR). Required for the transport of CALCRL to the plasma membrane. Together with CALCRL, form a receptor complex for adrenomedullin/ADM. Together with CALCR, act as a receptor complex for calcitonin/CT/CALC. Together with CALCR, also act as a receptor complex for amylin/IAPP. This is Receptor activity-modifying protein 2 from Rattus norvegicus (Rat).